An 88-amino-acid polypeptide reads, in one-letter code: Protein MATERNALLY EXPRESSED GENE 2 (88 aa).

An N-terminal signal peptide occupies residues 1-27; sequence MEYRKRVDALVFFSLLLLGYFAAHAHG. Cys65 and Cys87 are oxidised to a cystine.

This sequence belongs to the MEG family. In terms of tissue distribution, expressed exclusively in endosperm.

This chain is Protein MATERNALLY EXPRESSED GENE 2 (MEG2), found in Zea mays (Maize).